The chain runs to 770 residues: Molybdenum cofactor sulfurase (770 aa).

K243 carries the N6-(pyridoxal phosphate)lysine modification. The active site involves C405. The 159-residue stretch at 611 to 769 folds into the MOSC domain; that stretch reads GDEVANWLCQ…LACGDPITVL (159 aa). Phosphoserine is present on S726.

It belongs to the class-V pyridoxal-phosphate-dependent aminotransferase family. MOCOS subfamily. The cofactor is pyridoxal 5'-phosphate.

It catalyses the reaction Mo-molybdopterin + L-cysteine + AH2 = thio-Mo-molybdopterin + L-alanine + A + H2O. It participates in cofactor biosynthesis; molybdopterin biosynthesis. Functionally, sulfurates the molybdenum cofactor. Sulfation of molybdenum is essential for xanthine dehydrogenase (XDH) and aldehyde oxidase (ADO) enzymes in which molybdenum cofactor is liganded by 1 oxygen and 1 sulfur atom in active form. The protein is Molybdenum cofactor sulfurase of Drosophila grimshawi (Hawaiian fruit fly).